We begin with the raw amino-acid sequence, 364 residues long: tRNA 2-selenouridine synthase (364 aa).

In terms of domain architecture, Rhodanese spans 14–137; that stretch reads LIADTPIIDV…LRQTAIQATI (124 aa). Residue cysteine 97 is the S-selanylcysteine intermediate of the active site.

This sequence belongs to the SelU family. As to quaternary structure, monomer.

It catalyses the reaction 5-methylaminomethyl-2-thiouridine(34) in tRNA + selenophosphate + (2E)-geranyl diphosphate + H2O + H(+) = 5-methylaminomethyl-2-selenouridine(34) in tRNA + (2E)-thiogeraniol + phosphate + diphosphate. It carries out the reaction 5-methylaminomethyl-2-thiouridine(34) in tRNA + (2E)-geranyl diphosphate = 5-methylaminomethyl-S-(2E)-geranyl-thiouridine(34) in tRNA + diphosphate. The catalysed reaction is 5-methylaminomethyl-S-(2E)-geranyl-thiouridine(34) in tRNA + selenophosphate + H(+) = 5-methylaminomethyl-2-(Se-phospho)selenouridine(34) in tRNA + (2E)-thiogeraniol. The enzyme catalyses 5-methylaminomethyl-2-(Se-phospho)selenouridine(34) in tRNA + H2O = 5-methylaminomethyl-2-selenouridine(34) in tRNA + phosphate. Involved in the post-transcriptional modification of the uridine at the wobble position (U34) of tRNA(Lys), tRNA(Glu) and tRNA(Gln). Catalyzes the conversion of 2-thiouridine (S2U-RNA) to 2-selenouridine (Se2U-RNA). Acts in a two-step process involving geranylation of 2-thiouridine (S2U) to S-geranyl-2-thiouridine (geS2U) and subsequent selenation of the latter derivative to 2-selenouridine (Se2U) in the tRNA chain. This is tRNA 2-selenouridine synthase from Escherichia coli O6:K15:H31 (strain 536 / UPEC).